Here is a 148-residue protein sequence, read N- to C-terminus: uncharacterized protein (148 aa).

The N-terminal stretch at 1-20 is a signal peptide; that stretch reads MNLTKLLPAFAAAVVLSACA.

This is an uncharacterized protein from Haemophilus influenzae (strain ATCC 51907 / DSM 11121 / KW20 / Rd).